We begin with the raw amino-acid sequence, 83 residues long: Beta-toxin Ct25 (83 aa).

Positions 1–18 are cleaved as a signal peptide; that stretch reads MKVLILIIASVLLIGVEC. Residues 19–81 enclose the LCN-type CS-alpha/beta domain; it reads KDGYPKNSEG…VWDSATNKCG (63 aa). 4 disulfide bridges follow: Cys-29-Cys-80, Cys-33-Cys-54, Cys-40-Cys-61, and Cys-44-Cys-63. Gly-81 is subject to Glycine amide.

It belongs to the long (4 C-C) scorpion toxin superfamily. Sodium channel inhibitor family. Beta subfamily. As to expression, expressed by the venom gland.

It is found in the secreted. Functionally, beta toxins bind voltage-independently at site-4 of sodium channels (Nav) and shift the voltage of activation toward more negative potentials thereby affecting sodium channel activation and promoting spontaneous and repetitive firing. This Centruroides tecomanus (Scorpion) protein is Beta-toxin Ct25.